A 265-amino-acid chain; its full sequence is uncharacterized protein (265 aa).

Residue Ser223 is modified to Phosphoserine.

This is an uncharacterized protein from Saccharomyces cerevisiae (strain ATCC 204508 / S288c) (Baker's yeast).